A 55-amino-acid polypeptide reads, in one-letter code: Large ribosomal subunit protein bL33 (55 aa).

The protein belongs to the bacterial ribosomal protein bL33 family.

The sequence is that of Large ribosomal subunit protein bL33 from Polaromonas sp. (strain JS666 / ATCC BAA-500).